We begin with the raw amino-acid sequence, 478 residues long: Noelin-2 (478 aa).

An N-terminal signal peptide occupies residues 1–16; that stretch reads MSVPLLKIGAVLSTMA. Residues Asn33, Asn98, Asn179, Asn299, Asn334, Asn423, and Asn465 are each glycosylated (N-linked (GlcNAc...) asparagine). Coiled coils occupy residues 86–109 and 160–218; these read SRELRQLMEKVQNVSQSMEVLELR and LEQY…QKLG. The Olfactomedin-like domain maps to 218–470; the sequence is GCGKLTGVSN…QVLYNVTLFH (253 aa). A disulfide bond links Cys219 and Cys401.

As to quaternary structure, peripherally associated with AMPAR complex. AMPAR complex consists of an inner core made of 4 pore-forming GluA/GRIA proteins (GRIA1, GRIA2, GRIA3 and GRIA4) and 4 major auxiliary subunits arranged in a twofold symmetry. One of the two pairs of distinct binding sites is occupied either by CNIH2, CNIH3 or CACNG2, CACNG3. The other harbors CACNG2, CACNG3, CACNG4, CACNG8 or GSG1L. This inner core of AMPAR complex is complemented by outer core constituents binding directly to the GluA/GRIA proteins at sites distinct from the interaction sites of the inner core constituents. Outer core constituents include at least PRRT1, PRRT2, CKAMP44/SHISA9, FRRS1L and NRN1. The proteins of the inner and outer core serve as a platform for other, more peripherally associated AMPAR constituents, including OLFM2. Alone or in combination, these auxiliary subunits control the gating and pharmacology of the AMPAR complex and profoundly impact their biogenesis and protein processing. Interacts with GRIA2. Interacts with OLFM1 and OLFM3. Interacts with SRF; the interaction promotes dissociation of SRF from the transcriptional repressor HEY2. Interacts with RUNX2. As to expression, expressed in the brain (at protein level). Expressed in carotid arteries and the aorta, mainly in aortic SMCs.

It localises to the secreted. The protein resides in the synapse. Its subcellular location is the membrane. It is found in the nucleus. The protein localises to the cytoplasm. Involved in transforming growth factor beta (TGF-beta)-induced smooth muscle differentiation. TGF-beta induces expression and nuclear translocation of OLFM2 where it binds to SRF, causing its dissociation from the transcriptional repressor HEY2/HERP1 and facilitating binding of SRF to target genes. Plays a role in AMPAR complex organization. Is a regulator of vascular smooth-muscle cell (SMC) phenotypic switching, that acts by promoting RUNX2 and inhibiting MYOCD binding to SRF. SMC phenotypic switching is the process through which vascular SMCs undergo transition between a quiescent contractile phenotype and a proliferative synthetic phenotype in response to pathological stimuli. SMC phenotypic plasticity is essential for vascular development and remodeling. The protein is Noelin-2 (Olfm2) of Rattus norvegicus (Rat).